The chain runs to 365 residues: tRNA/tmRNA (uracil-C(5))-methyltransferase (365 aa).

Residues glutamine 188, tyrosine 216, asparagine 221, glutamate 237, and aspartate 297 each contribute to the S-adenosyl-L-methionine site. Cysteine 322 serves as the catalytic Nucleophile. Glutamate 356 acts as the Proton acceptor in catalysis.

Belongs to the class I-like SAM-binding methyltransferase superfamily. RNA M5U methyltransferase family. TrmA subfamily.

The catalysed reaction is uridine(54) in tRNA + S-adenosyl-L-methionine = 5-methyluridine(54) in tRNA + S-adenosyl-L-homocysteine + H(+). The enzyme catalyses uridine(341) in tmRNA + S-adenosyl-L-methionine = 5-methyluridine(341) in tmRNA + S-adenosyl-L-homocysteine + H(+). Its function is as follows. Dual-specificity methyltransferase that catalyzes the formation of 5-methyluridine at position 54 (m5U54) in all tRNAs, and that of position 341 (m5U341) in tmRNA (transfer-mRNA). The polypeptide is tRNA/tmRNA (uracil-C(5))-methyltransferase (Aggregatibacter aphrophilus (strain NJ8700) (Haemophilus aphrophilus)).